The chain runs to 179 residues: Large ribosomal subunit protein uL10 (179 aa).

A binds L7/L12 dimers region spans residues 137–179; the sequence is KEELYAMLVGRVKAPITGLVFALSGILRNLVYVLNAIKEKKSE.

In terms of assembly, part of the ribosomal stalk of the 50S ribosomal subunit. The N-terminus interacts with L11 and 23S rRNA to form the base of the stalk. The C-terminus forms an elongated spine to which 3 L12 dimers bind in a sequential fashion forming a heptameric L10(L12)2(L12)2(L12)2 complex.

Forms part of the ribosomal stalk, playing a central role in the interaction of the ribosome with GTP-bound translation factors (such as IF-2, EF-Tu, EF-G and RF3). This Thermotoga maritima (strain ATCC 43589 / DSM 3109 / JCM 10099 / NBRC 100826 / MSB8) protein is Large ribosomal subunit protein uL10 (rplJ).